Here is a 173-residue protein sequence, read N- to C-terminus: Peptide methionine sulfoxide reductase MsrA (173 aa).

Residue C10 is part of the active site.

The protein belongs to the MsrA Met sulfoxide reductase family.

The enzyme catalyses L-methionyl-[protein] + [thioredoxin]-disulfide + H2O = L-methionyl-(S)-S-oxide-[protein] + [thioredoxin]-dithiol. It carries out the reaction [thioredoxin]-disulfide + L-methionine + H2O = L-methionine (S)-S-oxide + [thioredoxin]-dithiol. Its function is as follows. Has an important function as a repair enzyme for proteins that have been inactivated by oxidation. Catalyzes the reversible oxidation-reduction of methionine sulfoxide in proteins to methionine. This chain is Peptide methionine sulfoxide reductase MsrA, found in Acinetobacter baumannii (strain AB307-0294).